Consider the following 315-residue polypeptide: Glutathione synthetase (315 aa).

One can recognise an ATP-grasp domain in the interval 125–310 (KLYTAWFADL…ITGMLMDAIE (186 aa)). 151–207 (WEKHGDIIMKPLDGMGGASIFRVKEGDPNIGVIAETLTELGNRYCMAQNYLPAIKDG) provides a ligand contact to ATP. The Mg(2+) site is built by Glu-281 and Asn-283.

This sequence belongs to the prokaryotic GSH synthase family. It depends on Mg(2+) as a cofactor. Requires Mn(2+) as cofactor.

It catalyses the reaction gamma-L-glutamyl-L-cysteine + glycine + ATP = glutathione + ADP + phosphate + H(+). Its pathway is sulfur metabolism; glutathione biosynthesis; glutathione from L-cysteine and L-glutamate: step 2/2. The sequence is that of Glutathione synthetase from Salmonella typhi.